The following is a 577-amino-acid chain: Proline--tRNA ligase (577 aa).

This sequence belongs to the class-II aminoacyl-tRNA synthetase family. ProS type 1 subfamily. In terms of assembly, homodimer.

Its subcellular location is the cytoplasm. The enzyme catalyses tRNA(Pro) + L-proline + ATP = L-prolyl-tRNA(Pro) + AMP + diphosphate. Its function is as follows. Catalyzes the attachment of proline to tRNA(Pro) in a two-step reaction: proline is first activated by ATP to form Pro-AMP and then transferred to the acceptor end of tRNA(Pro). As ProRS can inadvertently accommodate and process non-cognate amino acids such as alanine and cysteine, to avoid such errors it has two additional distinct editing activities against alanine. One activity is designated as 'pretransfer' editing and involves the tRNA(Pro)-independent hydrolysis of activated Ala-AMP. The other activity is designated 'posttransfer' editing and involves deacylation of mischarged Ala-tRNA(Pro). The misacylated Cys-tRNA(Pro) is not edited by ProRS. In Chlamydia abortus (strain DSM 27085 / S26/3) (Chlamydophila abortus), this protein is Proline--tRNA ligase.